A 147-amino-acid polypeptide reads, in one-letter code: Hemoglobin subunit beta (147 aa).

An N-acetylvaline modification is found at valine 2. A Globin domain is found at 3-147 (HLTAEEKAAV…VATALAHKYH (145 aa)). The residue at position 13 (threonine 13) is a Phosphothreonine. A Phosphoserine modification is found at serine 45. Lysine 60 bears the N6-acetyllysine mark. Position 64 (histidine 64) interacts with heme b. Lysine 83 carries the N6-acetyllysine modification. Histidine 93 is a binding site for heme b. At cysteine 94 the chain carries S-nitrosocysteine. At lysine 145 the chain carries N6-acetyllysine.

This sequence belongs to the globin family. In terms of assembly, heterotetramer of two alpha chains and two beta chains. As to expression, red blood cells.

Functionally, involved in oxygen transport from the lung to the various peripheral tissues. This Carlito syrichta (Philippine tarsier) protein is Hemoglobin subunit beta (HBB).